Consider the following 189-residue polypeptide: Chitin synthase 1 (189 aa).

Belongs to the chitin synthase family. Class I subfamily.

It is found in the cell membrane. The enzyme catalyses [(1-&gt;4)-N-acetyl-beta-D-glucosaminyl](n) + UDP-N-acetyl-alpha-D-glucosamine = [(1-&gt;4)-N-acetyl-beta-D-glucosaminyl](n+1) + UDP + H(+). Functionally, polymerizes chitin, a structural polymer of the cell wall and septum, by transferring the sugar moiety of UDP-GlcNAc to the non-reducing end of the growing chitin polymer. The polypeptide is Chitin synthase 1 (CHS1) (Ajellomyces capsulatus (Darling's disease fungus)).